The chain runs to 1978 residues: Centrosomal protein Cep290 (1978 aa).

The segment at 1–650 (MSMDIPETVS…SLCEVPEIAE (650 aa)) is necessary and sufficient for function in ciliogenesis, transition zone (TZ) assembly, and recruitment of DZP1 and Mks1 to the TZ. Also required for subcellular localization to the cilium basal body. Coiled-coil stretches lie at residues 76 to 384 (DRRL…KSQQ) and 471 to 505 (IERL…LQQD). Residues 271-296 (QLEGKSISSGQTNSSNSQSQQEEEHA) form a disordered region. The span at 276–290 (SISSGQTNSSNSQSQ) shows a compositional bias: low complexity. The interval 663-688 (ATRPSSPTEATMGLRRPTVPDPEEKP) is disordered. Coiled coils occupy residues 853–887 (FEEQ…ANEQ), 922–970 (LAKV…TQQD), and 1192–1233 (ADAV…SRSE). The span at 1313 to 1324 (KEKLRQKPEVPV) shows a compositional bias: basic and acidic residues. A disordered region spans residues 1313-1397 (KEKLRQKPEV…EKQDTEELKE (85 aa)). The span at 1329–1341 (STDSRSSSSSDSS) shows a compositional bias: low complexity. Over residues 1379–1391 (VTEEPEGEEEKQD) the composition is skewed to acidic residues. Coiled coils occupy residues 1405-1439 (IKDL…CQER) and 1501-1654 (LNRT…LESK). Disordered stretches follow at residues 1684–1714 (VGVS…AHHH) and 1859–1884 (LKDG…RLQQ). Over residues 1693-1708 (PSESPETYTGPSSECS) the composition is skewed to polar residues. Residues 1726–1935 (IEALKSRIEL…KEQLVKKTQL (210 aa)) adopt a coiled-coil conformation.

In terms of assembly, interacts (via N-terminus) with DZIP1. In terms of tissue distribution, expressed in sensory neurons type I and in germ cells (at protein level).

It is found in the cytoplasm. The protein localises to the cytoskeleton. Its subcellular location is the cilium basal body. The protein resides in the microtubule organizing center. It localises to the centrosome. It is found in the centriole. Essential for ciliogenesis in sensory neurons and spermatocytes. During neuron and spermatocyte ciliogenesis, essential for initiating transition zone (TZ) assembly and is required for the formation of diverse connections between microtubules and between microtubules and the membrane. Regulates TZ assembly by recruiting DZIP1 to the plasma membrane where it promotes early ciliary membrane formation resulting in the initiation of TZ assembly. The sequence is that of Centrosomal protein Cep290 from Drosophila melanogaster (Fruit fly).